Reading from the N-terminus, the 190-residue chain is Cytoglobin (190 aa).

Residues 18–167 enclose the Globin domain; the sequence is ELSEAERKAV…IYSHVTAAYK (150 aa). Cys38 and Cys83 are joined by a disulfide. The heme b site is built by His81 and His113.

It belongs to the globin family. Monomeric. Homodimer; disulfide-linked in vitro. Also homooligomeric in vitro. In terms of processing, the formation of an intramolecular disulfide bond between cysteines Cys-38 and Cys-83 specifically enhances the nitrite reductase activity. Widely expressed. Highest expression in heart, stomach, bladder and small intestine.

The protein resides in the cytoplasm. It localises to the nucleus. The catalysed reaction is Fe(II)-heme b-[protein] + nitric oxide + O2 = Fe(III)-heme b-[protein] + nitrate. The enzyme catalyses Fe(III)-heme b-[protein] + nitric oxide + H2O = Fe(II)-heme b-[protein] + nitrite + 2 H(+). It catalyses the reaction 2 superoxide + 2 H(+) = H2O2 + O2. It carries out the reaction H2O2 + AH2 = A + 2 H2O. The nitric oxide dioxygenase activity is activated by a reducing system composed of cytochrome b5, its upstream reductase CYB5R3 and NADH. Probable multifunctional globin with a hexacoordinated heme iron required for the catalysis of various reactions depending on redox condition of the cell as well as oxygen availability. Has a nitric oxide dioxygenase (NOD) activity and is most probably involved in cell-mediated and oxygen-dependent nitric oxide consumption. By scavenging this second messenger may regulate several biological processes including endothelium-mediated vasodilation and vascular tone. Under normoxic conditions functions as a nitric oxide dioxygenase (NOD) but under hypoxic conditions the globin may switch its function to that of a nitrite (NO2) reductase (NiR), generating nitric oxide. Could also have peroxidase and superoxide dismutase activities, detoxifying reactive oxygen species and protecting cells against oxidative stress. Also binds dioxygen with low affinity and could function as an oxygen sensor but has probably no function as a respiratory oxygen carrier. In Homo sapiens (Human), this protein is Cytoglobin.